We begin with the raw amino-acid sequence, 60 residues long: Large ribosomal subunit protein bL32 (60 aa).

The protein belongs to the bacterial ribosomal protein bL32 family.

The chain is Large ribosomal subunit protein bL32 from Latilactobacillus sakei subsp. sakei (strain 23K) (Lactobacillus sakei subsp. sakei).